The following is a 204-amino-acid chain: CLAVATA3/ESR (CLE)-related protein 1 (204 aa).

Positions 1–21 (MAKNAMLCLLILSVVLALAFA) are cleaved as a signal peptide. Positions 21–83 (ATNEKDDKEA…SNQLQNAYRM (63 aa)) are required for secretion from the host cytoplasm to the host apoplasm. The N-linked (GlcNAc...) asparagine glycan is linked to N32. Residues 116–204 (RNTGMKPQSY…TPGVPDRQHR (89 aa)) form a disordered region. Basic and acidic residues-rich tracts occupy residues 139–151 (LHNR…EQKR), 160–172 (LHNR…EQKR), and 181–193 (LHNR…EQKR). 3 propeptides (removed in mature form) span residues 142–150 (REKILEEQK), 163–171 (REKTLEEQK), and 184–192 (REKTLEEQK).

Belongs to the CLV3/ESR signal peptide family. Post-translationally, preprocessing of the precursor by host proteases leads first to the production of 21-mer CLE-containing peptides (Arg-130 to Lys-150, Arg-151 to Lys-171 and Arg-172 to Lys-192) followed by an ultimate C-term trimming to give the mature 12-mer CLE1-1 peptide. Highly expressed exclusively within the dorsal esophageal gland cell during syncytium formation in host plants.

The protein localises to the secreted. It is found in the host cytoplasm. Its subcellular location is the host extracellular space. It localises to the extracellular space. The protein resides in the apoplast. Its function is as follows. Mimics host plant CLE extracellular signal peptides that regulate cell fate. May play a role in the differentiation or division of feeding cells (syncytia) induced in plant roots during infection. This chain is CLAVATA3/ESR (CLE)-related protein 1, found in Globodera rostochiensis (Golden nematode worm).